Here is a 203-residue protein sequence, read N- to C-terminus: Small ribosomal subunit protein uS4 (203 aa).

In terms of domain architecture, S4 RNA-binding spans Q93–Q153.

This sequence belongs to the universal ribosomal protein uS4 family. Part of the 30S ribosomal subunit. Contacts protein S5. The interaction surface between S4 and S5 is involved in control of translational fidelity.

In terms of biological role, one of the primary rRNA binding proteins, it binds directly to 16S rRNA where it nucleates assembly of the body of the 30S subunit. Functionally, with S5 and S12 plays an important role in translational accuracy. This chain is Small ribosomal subunit protein uS4, found in Leuconostoc mesenteroides subsp. mesenteroides (strain ATCC 8293 / DSM 20343 / BCRC 11652 / CCM 1803 / JCM 6124 / NCDO 523 / NBRC 100496 / NCIMB 8023 / NCTC 12954 / NRRL B-1118 / 37Y).